We begin with the raw amino-acid sequence, 428 residues long: Secernin-2 (428 aa).

The active site involves C10.

Belongs to the peptidase C69 family. Secernin subfamily.

In Xenopus laevis (African clawed frog), this protein is Secernin-2 (scrn2).